The primary structure comprises 48 residues: uncharacterized protein (48 aa).

This is an uncharacterized protein from Haemophilus influenzae (strain ATCC 51907 / DSM 11121 / KW20 / Rd).